The following is a 308-amino-acid chain: HTH-type transcriptional activator AllS (308 aa).

Positions 2 to 59 (FDPETLRTFIAVAETGSFSKAAERLCKTTATISYRIKLLEENTGVALFFRTTRSVTLT) constitute an HTH lysR-type domain. Residues 19–38 (FSKAAERLCKTTATISYRIK) constitute a DNA-binding region (H-T-H motif).

This sequence belongs to the LysR transcriptional regulatory family.

Functionally, positive regulator essential for the expression of allD operon. Binds to the allD promoter. This chain is HTH-type transcriptional activator AllS (allS), found in Escherichia coli O6:K15:H31 (strain 536 / UPEC).